Consider the following 84-residue polypeptide: Small ribosomal subunit protein bS20 (84 aa).

It belongs to the bacterial ribosomal protein bS20 family.

Binds directly to 16S ribosomal RNA. The sequence is that of Small ribosomal subunit protein bS20 from Lactiplantibacillus plantarum (strain ATCC BAA-793 / NCIMB 8826 / WCFS1) (Lactobacillus plantarum).